The sequence spans 125 residues: Protein ApaG (125 aa).

One can recognise an ApaG domain in the interval 1 to 125 (MFTSSKVAIQ…FRLAIPTLIN (125 aa)).

In Proteus mirabilis (strain HI4320), this protein is Protein ApaG.